Reading from the N-terminus, the 420-residue chain is Peroxisomal biogenesis factor 3 (420 aa).

Topologically, residues 1–16 (MPIFSSLNSFLRRHKK) are peroxisomal. The chain crosses the membrane as a helical span at residues 17-37 (KLIVTATLTFSAYFLVNQFII). The Cytoplasmic portion of the chain corresponds to 38–420 (KKLKNFQNSL…FSASIYSNFE (383 aa)).

It belongs to the peroxin-3 family.

The protein resides in the peroxisome membrane. In terms of biological role, involved in peroxisome biosynthesis. The sequence is that of Peroxisomal biogenesis factor 3 (PEX3) from Debaryomyces hansenii (strain ATCC 36239 / CBS 767 / BCRC 21394 / JCM 1990 / NBRC 0083 / IGC 2968) (Yeast).